A 135-amino-acid chain; its full sequence is MNVEVGEECIRFAKVIRYFTLAGLILLVVSSAMYLLDIDPFVEPDRVVETWHLPASEFWKVNVGKEMESYSEFLYIAHPDNVAVFSLFFLALAPVFALLSILPKMKGIYRILTILVVAELLFGAVRPLILGAIGE.

3 helical membrane passes run 13-35 (AKVIRYFTLAGLILLVVSSAMYL), 82-101 (VAVFSLFFLALAPVFALLSI), and 108-130 (IYRILTILVVAELLFGAVRPLIL).

The protein localises to the cell membrane. This is an uncharacterized protein from Archaeoglobus fulgidus (strain ATCC 49558 / DSM 4304 / JCM 9628 / NBRC 100126 / VC-16).